We begin with the raw amino-acid sequence, 117 residues long: Small ribosomal subunit protein bS16 (117 aa).

The segment covering 81-90 (LKKRPNRNNP) has biased composition (basic residues). Positions 81-117 (LKKRPNRNNPHKGQPGKKAQERISAAKQVAEAESAPV) are disordered.

Belongs to the bacterial ribosomal protein bS16 family.

The protein is Small ribosomal subunit protein bS16 of Bartonella quintana (strain Toulouse) (Rochalimaea quintana).